The sequence spans 116 residues: Large ribosomal subunit protein bL17 (116 aa).

Belongs to the bacterial ribosomal protein bL17 family. As to quaternary structure, part of the 50S ribosomal subunit. Contacts protein L32.

In Synechococcus sp. (strain JA-3-3Ab) (Cyanobacteria bacterium Yellowstone A-Prime), this protein is Large ribosomal subunit protein bL17.